The sequence spans 260 residues: Pyridoxine 5'-phosphate synthase (260 aa).

The 3-amino-2-oxopropyl phosphate site is built by Asn-10 and Arg-21. His-46 (proton acceptor) is an active-site residue. 2 residues coordinate 1-deoxy-D-xylulose 5-phosphate: Arg-48 and His-53. Catalysis depends on Glu-76, which acts as the Proton acceptor. Position 113 (Thr-113) interacts with 1-deoxy-D-xylulose 5-phosphate. His-204 (proton donor) is an active-site residue. 3-amino-2-oxopropyl phosphate contacts are provided by residues Asp-205 and 227–228 (GH).

It belongs to the PNP synthase family. As to quaternary structure, homooctamer; tetramer of dimers.

It localises to the cytoplasm. The catalysed reaction is 3-amino-2-oxopropyl phosphate + 1-deoxy-D-xylulose 5-phosphate = pyridoxine 5'-phosphate + phosphate + 2 H2O + H(+). The protein operates within cofactor biosynthesis; pyridoxine 5'-phosphate biosynthesis; pyridoxine 5'-phosphate from D-erythrose 4-phosphate: step 5/5. In terms of biological role, catalyzes the complicated ring closure reaction between the two acyclic compounds 1-deoxy-D-xylulose-5-phosphate (DXP) and 3-amino-2-oxopropyl phosphate (1-amino-acetone-3-phosphate or AAP) to form pyridoxine 5'-phosphate (PNP) and inorganic phosphate. This Xylella fastidiosa (strain M12) protein is Pyridoxine 5'-phosphate synthase.